The chain runs to 287 residues: Pantothenate synthetase (287 aa).

Position 30-37 (30-37) interacts with ATP; it reads MGNLHSGH. Catalysis depends on His37, which acts as the Proton donor. Residue Gln61 coordinates (R)-pantoate. Gln61 is a beta-alanine binding site. An ATP-binding site is contributed by 149–152; it reads GEKD. Position 155 (Gln155) interacts with (R)-pantoate. ATP contacts are provided by residues Val178 and 186 to 189; that span reads LSSR.

This sequence belongs to the pantothenate synthetase family. Homodimer.

Its subcellular location is the cytoplasm. The catalysed reaction is (R)-pantoate + beta-alanine + ATP = (R)-pantothenate + AMP + diphosphate + H(+). The protein operates within cofactor biosynthesis; (R)-pantothenate biosynthesis; (R)-pantothenate from (R)-pantoate and beta-alanine: step 1/1. Functionally, catalyzes the condensation of pantoate with beta-alanine in an ATP-dependent reaction via a pantoyl-adenylate intermediate. In Pseudomonas entomophila (strain L48), this protein is Pantothenate synthetase.